The primary structure comprises 398 residues: Arylacetamide deacetylase (398 aa).

At 1–4 (GVKT) the chain is on the cytoplasmic side. The chain crosses the membrane as a helical; Signal-anchor for type II membrane protein span at residues 5–22 (VLLLIVGVLGAYYVYTPL). Topologically, residues 23 to 398 (PDNIEEPWRL…QYFEWLRENV (376 aa)) are lumenal. A glycan (N-linked (GlcNAc...) asparagine) is linked at Asn77. The Involved in the stabilization of the negatively charged intermediate by the formation of the oxyanion hole signature appears at 110-112 (HGG). Cys115 and Cys339 are joined by a disulfide. Ser188 is an active-site residue. Asn281 carries an N-linked (GlcNAc...) asparagine glycan. Residues Asp342 and His372 contribute to the active site.

It belongs to the 'GDXG' lipolytic enzyme family. In terms of processing, glycosylated.

It localises to the endoplasmic reticulum membrane. Its subcellular location is the microsome membrane. The enzyme catalyses a triacylglycerol + H2O = a diacylglycerol + a fatty acid + H(+). Inhibited by diisopropylphosphofluoridate (DFP). In terms of biological role, displays cellular triglyceride lipase activity in liver, increases the levels of intracellular fatty acids derived from the hydrolysis of newly formed triglyceride stores and plays a role in very low-density lipoprotein assembly. Displays serine esterase activity in liver. Deacetylates a variety of arylacetamide substrates, including xenobiotic compounds and procarcinogens, converting them to the primary arylamide compounds and increasing their toxicity. The polypeptide is Arylacetamide deacetylase (Oryctolagus cuniculus (Rabbit)).